A 471-amino-acid chain; its full sequence is uncharacterized protein (471 aa).

The disordered stretch occupies residues 13–57; sequence KGGATIGATPMESDSSVSALSGSSASKVSRRGRRRSHLASKSSAP. Positions 27 to 39 are enriched in low complexity; it reads SSVSALSGSSASK. Residues 40–50 are compositionally biased toward basic residues; that stretch reads VSRRGRRRSHL. 2 consecutive CCHC-type zinc fingers follow at residues 397–414 and 417–434; these read YACHRCVGFDHKVSECRQ and SVCRQCGQQGHTAAKCQN. The segment at 438 to 457 is gag-like cysteine motif; the sequence is CRNCRHRGQPSGHYMLSNAC.

To corresponding ORF of B.mori (R1BM).

This is an uncharacterized protein from Drosophila melanogaster (Fruit fly).